The primary structure comprises 211 residues: 3-demethoxyubiquinol 3-hydroxylase (211 aa).

Fe cation is bound by residues glutamate 60, glutamate 90, histidine 93, glutamate 142, glutamate 174, and histidine 177.

Belongs to the COQ7 family. Fe cation is required as a cofactor.

It is found in the cell membrane. The enzyme catalyses a 5-methoxy-2-methyl-3-(all-trans-polyprenyl)benzene-1,4-diol + AH2 + O2 = a 3-demethylubiquinol + A + H2O. Its pathway is cofactor biosynthesis; ubiquinone biosynthesis. Its function is as follows. Catalyzes the hydroxylation of 2-nonaprenyl-3-methyl-6-methoxy-1,4-benzoquinol during ubiquinone biosynthesis. In Herminiimonas arsenicoxydans, this protein is 3-demethoxyubiquinol 3-hydroxylase.